Consider the following 714-residue polypeptide: Fatty acid oxidation complex subunit alpha (714 aa).

Residues 1–190 are enoyl-CoA hydratase; it reads MDTVSAFKLE…KAGLVDEVVP (190 aa). The segment at 306-714 is 3-hydroxyacyl-CoA dehydrogenase; sequence GPLTSIAVLG…TFWPADERLT (409 aa).

The protein in the N-terminal section; belongs to the enoyl-CoA hydratase/isomerase family. In the central section; belongs to the 3-hydroxyacyl-CoA dehydrogenase family. As to quaternary structure, heterotetramer of two alpha chains (FadJ) and two beta chains (FadI).

Its subcellular location is the cytoplasm. It catalyses the reaction a (3S)-3-hydroxyacyl-CoA = a (2E)-enoyl-CoA + H2O. It carries out the reaction a 4-saturated-(3S)-3-hydroxyacyl-CoA = a (3E)-enoyl-CoA + H2O. The catalysed reaction is a (3S)-3-hydroxyacyl-CoA + NAD(+) = a 3-oxoacyl-CoA + NADH + H(+). The enzyme catalyses (3S)-3-hydroxybutanoyl-CoA = (3R)-3-hydroxybutanoyl-CoA. The protein operates within lipid metabolism; fatty acid beta-oxidation. Its function is as follows. Catalyzes the formation of a hydroxyacyl-CoA by addition of water on enoyl-CoA. Also exhibits 3-hydroxyacyl-CoA epimerase and 3-hydroxyacyl-CoA dehydrogenase activities. This Klebsiella pneumoniae (strain 342) protein is Fatty acid oxidation complex subunit alpha.